Here is a 1071-residue protein sequence, read N- to C-terminus: V-type proton ATPase catalytic subunit A (1071 aa).

Ala2 carries the N-acetylalanine modification. Phosphothreonine is present on Thr131. 257 to 264 (GAFGCGKT) provides a ligand contact to ATP. In terms of domain architecture, DOD-type homing endonuclease spans 494–642 (LLGLWIGDGL…LVSLARSLGL (149 aa)). Residues Ser858 and Ser928 each carry the phosphoserine modification.

It belongs to the ATPase alpha/beta chains family. V-ATPase is a heteromultimeric enzyme composed of a peripheral catalytic V1 complex (components A to H) attached to an integral membrane V0 proton pore complex (components: a, c, c', c'', d, e, f and VOA1). Interacts with RAV1 and RAV2 components of the RAVE complex, which are essential for the stability and assembly of V-ATPase. Post-translationally, this protein undergoes a protein self splicing that involves a post-translational excision of the VDE intervening region (intein) followed by peptide ligation.

Its subcellular location is the vacuole membrane. It catalyses the reaction ATP + H2O + 4 H(+)(in) = ADP + phosphate + 5 H(+)(out). Catalytic subunit of the V1 complex of vacuolar(H+)-ATPase (V-ATPase), a multisubunit enzyme composed of a peripheral complex (V1) that hydrolyzes ATP and a membrane integral complex (V0) that translocates protons. V-ATPase is responsible for acidifying and maintaining the pH of intracellular compartments. In terms of biological role, PI-SceI is an endonuclease that can cleave at a site present in a VMA1 allele that lacks the derived endonuclease segment of the open reading frame; cleavage at this site only occurs during meiosis and initiates 'homing', a genetic event that converts a VMA1 allele lacking VDE into one that contains it. The sequence is that of V-type proton ATPase catalytic subunit A from Saccharomyces cerevisiae (strain ATCC 204508 / S288c) (Baker's yeast).